Reading from the N-terminus, the 213-residue chain is N-(5'-phosphoribosyl)anthranilate isomerase (213 aa).

The protein belongs to the TrpF family.

The catalysed reaction is N-(5-phospho-beta-D-ribosyl)anthranilate = 1-(2-carboxyphenylamino)-1-deoxy-D-ribulose 5-phosphate. It participates in amino-acid biosynthesis; L-tryptophan biosynthesis; L-tryptophan from chorismate: step 3/5. The chain is N-(5'-phosphoribosyl)anthranilate isomerase from Hahella chejuensis (strain KCTC 2396).